Consider the following 473-residue polypeptide: 3-isopropylmalate dehydratase large subunit (473 aa).

Residues Cys-348, Cys-408, and Cys-411 each coordinate [4Fe-4S] cluster.

It belongs to the aconitase/IPM isomerase family. LeuC type 1 subfamily. As to quaternary structure, heterodimer of LeuC and LeuD. [4Fe-4S] cluster serves as cofactor.

The enzyme catalyses (2R,3S)-3-isopropylmalate = (2S)-2-isopropylmalate. It functions in the pathway amino-acid biosynthesis; L-leucine biosynthesis; L-leucine from 3-methyl-2-oxobutanoate: step 2/4. Functionally, catalyzes the isomerization between 2-isopropylmalate and 3-isopropylmalate, via the formation of 2-isopropylmaleate. The sequence is that of 3-isopropylmalate dehydratase large subunit from Haloarcula marismortui (strain ATCC 43049 / DSM 3752 / JCM 8966 / VKM B-1809) (Halobacterium marismortui).